A 105-amino-acid polypeptide reads, in one-letter code: Large ribosomal subunit protein bL21 (105 aa).

This sequence belongs to the bacterial ribosomal protein bL21 family. In terms of assembly, part of the 50S ribosomal subunit. Contacts protein L20.

Functionally, this protein binds to 23S rRNA in the presence of protein L20. This chain is Large ribosomal subunit protein bL21, found in Dictyoglomus turgidum (strain DSM 6724 / Z-1310).